The sequence spans 284 residues: Exosome complex component MTR3 (284 aa).

It belongs to the RNase PH family. Component of the RNA exosome complex.

It localises to the cytoplasm. The protein localises to the nucleus. It is found in the nucleolus. Its function is as follows. Non-catalytic component of the RNA exosome complex which has 3'-&gt;5' exoribonuclease activity and participates in a multitude of cellular RNA processing and degradation events. This Chaetomium thermophilum (strain DSM 1495 / CBS 144.50 / IMI 039719) (Thermochaetoides thermophila) protein is Exosome complex component MTR3 (MTR3).